The primary structure comprises 198 residues: MYSYIIGVITEVHENYIVLENNNIGYKIFITDFFRDNVSAFDEYKVYTEFVEREDASILYGFSSQKERELFNLLTDVTSIGPKYAMNILSTMTVDECKTAIITDDIKLLTQAPGVGKKTASRIILELKEKIEKDFVPSEKPVNKEVKRSNDSEFAREALLQLGYFKNDVDAFIENTDISGLSIEDIMKKAMKSLDSSR.

The tract at residues 1 to 63 (MYSYIIGVIT…EDASILYGFS (63 aa)) is domain I. The domain II stretch occupies residues 64 to 142 (SQKERELFNL…KDFVPSEKPV (79 aa)). Residues 143-153 (NKEVKRSNDSE) form a flexible linker region. Residues 153 to 198 (EFAREALLQLGYFKNDVDAFIENTDISGLSIEDIMKKAMKSLDSSR) form a domain III region.

The protein belongs to the RuvA family. As to quaternary structure, homotetramer. Forms an RuvA(8)-RuvB(12)-Holliday junction (HJ) complex. HJ DNA is sandwiched between 2 RuvA tetramers; dsDNA enters through RuvA and exits via RuvB. An RuvB hexamer assembles on each DNA strand where it exits the tetramer. Each RuvB hexamer is contacted by two RuvA subunits (via domain III) on 2 adjacent RuvB subunits; this complex drives branch migration. In the full resolvosome a probable DNA-RuvA(4)-RuvB(12)-RuvC(2) complex forms which resolves the HJ.

Its subcellular location is the cytoplasm. In terms of biological role, the RuvA-RuvB-RuvC complex processes Holliday junction (HJ) DNA during genetic recombination and DNA repair, while the RuvA-RuvB complex plays an important role in the rescue of blocked DNA replication forks via replication fork reversal (RFR). RuvA specifically binds to HJ cruciform DNA, conferring on it an open structure. The RuvB hexamer acts as an ATP-dependent pump, pulling dsDNA into and through the RuvAB complex. HJ branch migration allows RuvC to scan DNA until it finds its consensus sequence, where it cleaves and resolves the cruciform DNA. The polypeptide is Holliday junction branch migration complex subunit RuvA (Finegoldia magna (strain ATCC 29328 / DSM 20472 / WAL 2508) (Peptostreptococcus magnus)).